A 217-amino-acid chain; its full sequence is Nascent polypeptide-associated complex subunit alpha (217 aa).

Positions M1–A45 are disordered. Residues A19 to D28 show a composition bias toward basic and acidic residues. Residues S70–A135 enclose the NAC-A/B domain. The disordered stretch occupies residues S154–V177. The segment covering A165–G176 has biased composition (acidic residues). Positions V177–L217 constitute a UBA domain.

It belongs to the NAC-alpha family. In terms of assembly, part of the nascent polypeptide-associated complex (NAC), consisting of Nac-alpha and bicaudal (bic).

In terms of biological role, may promote appropriate targeting of ribosome-nascent polypeptide complexes. Required for correct localization of the osk/oskar protein to the posterior pole during embryonic development. The osk protein directs the recruitment of molecules responsible for posterior body patterning and germline formation in the embryo. This is Nascent polypeptide-associated complex subunit alpha (Nacalpha) from Drosophila melanogaster (Fruit fly).